We begin with the raw amino-acid sequence, 346 residues long: MSTPTRTVTLVDTTLRDGMSSVSHRFTPNDVAAIAAGLDRAGVRTIEVAHGIGLGASSIQYGFAAATDPEYVRAAVDAVDHADIAVLYVPGIATLAELRAAVEAGIRTVRVAVHCTEADCAQQPVEWAKDHGLTVMTFLMMSHKLDPEPLAEQAVKLESYGADVVYVVDSAGAMVPRHAGDRVAALRRAISAEIGFHAHNNLGVGIANALTAAENGATFIDGSLRGLGASAGNAQTEVLAAAFERAGWHTGVELFPLIDTAEQVVAPLMTEPQIVDETALVLGYAGVYSTFFHPTKRAAAKFGVPTRDILLELGRRGVIGGQEDMIVDVASELAGRTYDLPARAGI.

The 251-residue stretch at 8 to 258 (VTLVDTTLRD…HTGVELFPLI (251 aa)) folds into the Pyruvate carboxyltransferase domain. Residues 16–17 (RD), serine 170, and histidine 197 each bind substrate. Aspartate 17 contacts Mn(2+). Histidine 197 and histidine 199 together coordinate Mn(2+). Tyrosine 288 is a binding site for substrate.

The protein belongs to the 4-hydroxy-2-oxovalerate aldolase family.

The enzyme catalyses (S)-4-hydroxy-2-oxopentanoate = acetaldehyde + pyruvate. The protein is 4-hydroxy-2-oxovalerate aldolase 2 of Nocardia farcinica (strain IFM 10152).